The primary structure comprises 51 residues: Sperm protamine P1 (51 aa).

It belongs to the protamine P1 family. As to expression, testis.

It localises to the nucleus. It is found in the chromosome. Functionally, protamines substitute for histones in the chromatin of sperm during the haploid phase of spermatogenesis. They compact sperm DNA into a highly condensed, stable and inactive complex. This is Sperm protamine P1 (PRM1) from Colobus guereza (Mantled guereza).